We begin with the raw amino-acid sequence, 232 residues long: Ribose-5-phosphate isomerase A (232 aa).

Residues threonine 31–threonine 34, aspartate 87–aspartate 90, and lysine 100–glycine 103 contribute to the substrate site. Residue glutamate 109 is the Proton acceptor of the active site. Lysine 127 is a substrate binding site.

Belongs to the ribose 5-phosphate isomerase family. In terms of assembly, homodimer.

The enzyme catalyses aldehydo-D-ribose 5-phosphate = D-ribulose 5-phosphate. The protein operates within carbohydrate degradation; pentose phosphate pathway; D-ribose 5-phosphate from D-ribulose 5-phosphate (non-oxidative stage): step 1/1. Catalyzes the reversible conversion of ribose-5-phosphate to ribulose 5-phosphate. The sequence is that of Ribose-5-phosphate isomerase A from Bifidobacterium longum (strain NCC 2705).